The primary structure comprises 84 residues: Toxin Tf2 (84 aa).

The first 20 residues, 1 to 20 (MKRFLLFISILMMIGTIVVG), serve as a signal peptide directing secretion. The 63-residue stretch at 21 to 83 (KEGYAMDHEG…VWDYATNKCG (63 aa)) folds into the LCN-type CS-alpha/beta domain. 4 disulfide bridges follow: C31-C82, C35-C58, C43-C63, and C47-C65. C82 is modified (cysteine amide).

Belongs to the long (4 C-C) scorpion toxin superfamily. Sodium channel inhibitor family. Beta subfamily. Contains 4 disulfide bonds. As to expression, expressed by the venom gland.

It localises to the secreted. Beta toxins bind voltage-independently at site-4 of sodium channels (Nav) and shift the voltage of activation toward more negative potentials thereby affecting sodium channel activation and promoting spontaneous and repetitive firing. This toxin is active against hNav1.3/SCN3A. The sequence is that of Toxin Tf2 from Tityus fasciolatus (Central Brazilian scorpion).